A 560-amino-acid chain; its full sequence is MQRRIAFSLLLLLPFASPALADSACPDWTAQRAAAELAALAERLRQWDVAYHRDGRSPVADELYDQARARLADWNRCFPGQADASPEPLAGSAGPLLHPVPHTGLAKLDEAAVRDWMATREDLWTQPKVDGVAVTLEYADGRLRRAISRGDGRHGQDWTARVRRLPALPRQLAERRRLILQGELYWRLPGHVQAEAGGRSARARVAGLLARDTLDDGDAAGIGLFVWDWPNGPADMRARLDGLERLGFAEARRYSRPVADFATARQWRERWYREPLPFASDGVVLRQGRRPPGERWRAEPPHWAVAWKYPLAQALAEVRAVRFRIGRSGRITPQLELQPVRLDDRQIRRVALGSLRRWRELDVRPGDQVAIRLAGQSIPQVDAVVWRAAERPALPSPDPAAHHALSCWRPLPGCEEQFLARLDWLGGRRGLDLRGVGRGTWEALLENGRLDDLLGWLELDEARLAELPGFGERSASLLAERFRAARRRPFPMWLRALGLPPAGEATLPPSWDELAGRGPEQWQREPGIGPGRARQLQAFFAHPEVQALRQRLRAAGVEGF.

The active-site N6-AMP-lysine intermediate is lysine 128.

This sequence belongs to the NAD-dependent DNA ligase family. LigB subfamily.

The catalysed reaction is NAD(+) + (deoxyribonucleotide)n-3'-hydroxyl + 5'-phospho-(deoxyribonucleotide)m = (deoxyribonucleotide)n+m + AMP + beta-nicotinamide D-nucleotide.. In terms of biological role, catalyzes the formation of phosphodiester linkages between 5'-phosphoryl and 3'-hydroxyl groups in double-stranded DNA using NAD as a coenzyme and as the energy source for the reaction. The chain is DNA ligase B from Azotobacter vinelandii (strain DJ / ATCC BAA-1303).